The sequence spans 539 residues: MSTARSDDDSWEITESVGATALGVASARAAETRSENPLIKDPFAQVFLDAAGDGVWNWHSAPQLPPELIEAEPTIPLQQQAMVGYMASRTAFFDSFFLEATGAGIRQAVILAAGLDARSWRLPWPAGTTVYELDQPRVLEFKESTLAEHGAQPACNRVAVPVDLRHDWPEALRQAGFDASAPSVWSAEGLMPYLPAAAQDLLFDRIQGLTVAGSRVAVEALGPKFLDPQARAKRRERMDRIQALMARIDPDRAVPRTDELWYFEEREDVGEWFGRHGWDVRVTPSDELMAGYGRGRRRPRSATSCRGTCSSPRSGGRPEGLAFRQGESRARRHRRDVAGQHGFGNQCGGPDCGSAQHRRAQVDHPAQQRGFSDDAPDAAPAERGEPGERGGQVVRLVDARGQHRGVLEPLATALTQVRAHRMSRVADHHDGPARPGPGGGAVVKVVAQHLVAGRRCQHPRNRFGPIGESCLQIGQFAARRELPFRSALGGEPIQAIRTHRHMAGFDAGTKCLAGQLGVHRRSPHRAMRCSRRTGRRAGR.

Residues aspartate 134 and 163 to 164 (DL) contribute to the S-adenosyl-L-methionine site. The segment at 290–392 (AGYGRGRRRP…RGEPGERGGQ (103 aa)) is disordered. The segment covering 301 to 313 (SATSCRGTCSSPR) has biased composition (polar residues). Gly residues predominate over residues 341–351 (HGFGNQCGGPD).

It belongs to the UPF0677 family.

Functionally, exhibits S-adenosyl-L-methionine-dependent methyltransferase activity. This Mycolicibacterium paratuberculosis (strain ATCC BAA-968 / K-10) (Mycobacterium paratuberculosis) protein is Putative S-adenosyl-L-methionine-dependent methyltransferase MAP_4079.